Reading from the N-terminus, the 228-residue chain is MLIQIPNVLTPEEVRYCRQRLESSNWVDGRVTAGDLAAQSKLNLQIPVDSEVAQELGEFILTALGRNASYHSAALPLRVLPPMFNRYEGGMTFGTHVDNAIRTVPGTGGMRIRADVSSTLFLTDPDEYDGGELVIKDLYGSHTVKLPAGHMVVYPASSLHAVTPVTRGARWASFFWAQSMVKDDGQRTMLYELDLTIMEVRRQLGDDKDAVLALVNHYHNLLRRWAEL.

Positions 78-179 constitute a Fe2OG dioxygenase domain; sequence RVLPPMFNRY…RWASFFWAQS (102 aa). Residues H96, D98, and H160 each contribute to the Fe cation site. Position 170 (R170) interacts with 2-oxoglutarate.

Requires Fe(2+) as cofactor. L-ascorbate is required as a cofactor.

This is PKHD-type hydroxylase Rmet_0838 from Cupriavidus metallidurans (strain ATCC 43123 / DSM 2839 / NBRC 102507 / CH34) (Ralstonia metallidurans).